Here is a 370-residue protein sequence, read N- to C-terminus: Queuine tRNA-ribosyltransferase (370 aa).

D89 acts as the Proton acceptor in catalysis. Substrate contacts are provided by residues 89–93, D143, and G214; that span reads DSGGF. Positions 245–251 are RNA binding; the sequence is GVGKPED. Catalysis depends on D264, which acts as the Nucleophile. Positions 269 to 273 are RNA binding; important for wobble base 34 recognition; the sequence is TRNAR. Zn(2+) is bound by residues C302, C304, C307, and H333.

The protein belongs to the queuine tRNA-ribosyltransferase family. In terms of assembly, homodimer. Within each dimer, one monomer is responsible for RNA recognition and catalysis, while the other monomer binds to the replacement base PreQ1. Zn(2+) serves as cofactor.

It catalyses the reaction 7-aminomethyl-7-carbaguanine + guanosine(34) in tRNA = 7-aminomethyl-7-carbaguanosine(34) in tRNA + guanine. It participates in tRNA modification; tRNA-queuosine biosynthesis. Its function is as follows. Catalyzes the base-exchange of a guanine (G) residue with the queuine precursor 7-aminomethyl-7-deazaguanine (PreQ1) at position 34 (anticodon wobble position) in tRNAs with GU(N) anticodons (tRNA-Asp, -Asn, -His and -Tyr). Catalysis occurs through a double-displacement mechanism. The nucleophile active site attacks the C1' of nucleotide 34 to detach the guanine base from the RNA, forming a covalent enzyme-RNA intermediate. The proton acceptor active site deprotonates the incoming PreQ1, allowing a nucleophilic attack on the C1' of the ribose to form the product. After dissociation, two additional enzymatic reactions on the tRNA convert PreQ1 to queuine (Q), resulting in the hypermodified nucleoside queuosine (7-(((4,5-cis-dihydroxy-2-cyclopenten-1-yl)amino)methyl)-7-deazaguanosine). The sequence is that of Queuine tRNA-ribosyltransferase from Buchnera aphidicola subsp. Acyrthosiphon pisum (strain 5A).